We begin with the raw amino-acid sequence, 443 residues long: Ribitol-5-phosphate xylosyltransferase 1 (443 aa).

Residues Met-1–Cys-9 are Cytoplasmic-facing. The chain crosses the membrane as a helical; Signal-anchor for type II membrane protein span at residues Ser-10–Gly-30. The Extracellular segment spans residues Arg-31–Ser-443. Residues Ala-35–Glu-76 form a disordered region. The segment covering Ala-50–Ser-59 has biased composition (basic and acidic residues).

This sequence belongs to the RXYLT1 family. In terms of assembly, forms a complex composed of FKTN/fukutin, FKRP and RXYLT1/TMEM5.

It is found in the golgi apparatus membrane. The catalysed reaction is 3-O-[Rib-ol-P-Rib-ol-P-3-beta-D-GalNAc-(1-&gt;3)-beta-D-GlcNAc-(1-&gt;4)-(O-6-P-alpha-D-Man)]-Thr-[protein] + UDP-alpha-D-xylose = 3-O-[beta-D-Xyl-(1-&gt;4)-Rib-ol-P-Rib-ol-P-3-beta-D-GalNAc-(1-&gt;3)-beta-D-GlcNAc-(1-&gt;4)-(O-6-P-alpha-D-Man)]-Thr-[protein] + UDP + H(+). The protein operates within protein modification; protein glycosylation. Acts as a UDP-D-xylose:ribitol-5-phosphate beta1,4-xylosyltransferase, which catalyzes the transfer of UDP-D-xylose to ribitol 5-phosphate (Rbo5P) to form the Xylbeta1-4Rbo5P linkage on O-mannosyl glycan. Participates in the biosynthesis of the phosphorylated O-mannosyl trisaccharide (N-acetylgalactosamine-beta-3-N-acetylglucosamine-beta-4-(phosphate-6-)mannose), a carbohydrate structure present in alpha-dystroglycan (DAG1), which is required for binding laminin G-like domain-containing extracellular proteins with high affinity. The protein is Ribitol-5-phosphate xylosyltransferase 1 of Homo sapiens (Human).